The chain runs to 373 residues: tRNA-specific 2-thiouridylase MnmA (373 aa).

ATP contacts are provided by residues 12–19 and methionine 38; that span reads GMSGGVDS. Residues 98 to 100 form an interaction with target base in tRNA region; it reads NPD. Cysteine 103 functions as the Nucleophile in the catalytic mechanism. A disulfide bridge connects residues cysteine 103 and cysteine 200. Residue glycine 127 coordinates ATP. Residues 150 to 152 are interaction with tRNA; it reads KDQ. The Cysteine persulfide intermediate role is filled by cysteine 200. The interval 312 to 313 is interaction with tRNA; it reads RY.

The protein belongs to the MnmA/TRMU family.

It localises to the cytoplasm. The enzyme catalyses S-sulfanyl-L-cysteinyl-[protein] + uridine(34) in tRNA + AH2 + ATP = 2-thiouridine(34) in tRNA + L-cysteinyl-[protein] + A + AMP + diphosphate + H(+). Functionally, catalyzes the 2-thiolation of uridine at the wobble position (U34) of tRNA, leading to the formation of s(2)U34. This is tRNA-specific 2-thiouridylase MnmA from Streptococcus pneumoniae (strain P1031).